Consider the following 250-residue polypeptide: Isoprenyl transferase (250 aa).

Residue aspartate 27 is part of the active site. Aspartate 27 is a Mg(2+) binding site. Substrate is bound by residues 28–31, tryptophan 32, histidine 48, and 76–78; these read GNRR and STE. Asparagine 79 acts as the Proton acceptor in catalysis. Substrate contacts are provided by residues phenylalanine 80, arginine 82, arginine 199, and 205 to 207; that span reads RVS. Glutamate 218 is a Mg(2+) binding site.

It belongs to the UPP synthase family. In terms of assembly, homodimer. It depends on Mg(2+) as a cofactor.

Functionally, catalyzes the condensation of isopentenyl diphosphate (IPP) with allylic pyrophosphates generating different type of terpenoids. In Chlamydia abortus (strain DSM 27085 / S26/3) (Chlamydophila abortus), this protein is Isoprenyl transferase.